The chain runs to 452 residues: MSQQGQAVARKFFGTDGIRGETNTGNMTPEIAMRVAQAAGEYFRRGDHRHRVVIGKDTRLSGYMMEAALVAGFTSVGMDVIQTGPLPTPAVALLTKEMRADLGVMISASHNPYRDNGIKLFGPDGFKLSDETELAIEQGIVSEPALVPAAEIGRARRIEDSRGRYIHALKQSVSDETRFDSLKVVVDCANGAAYQVAPSAIWELGAEIITLGVTPNGTNINDGVGSTSLDAIKRTVVEEGADIGIALDGDADRLIVIDEKGEAVDGDQIMGLIATRMAEKQALRGGGVVATVMSNLGLERYLDSKNLRLERTQVGDRYVLERMKTGGFNIGGEQSGHMILLDHATTGDGTVAALRVLASLVNSGKPASEVLHVFEKVPQLLKNVRYEGGRPLDKDSVQTAIADAEKALDGKGRLVIRPSGTEPVIRVMAEGDDADQVETVVDQICDAVKAAG.

The active-site Phosphoserine intermediate is the Ser-109. Residues Ser-109, Asp-248, Asp-250, and Asp-252 each coordinate Mg(2+). At Ser-109 the chain carries Phosphoserine.

The protein belongs to the phosphohexose mutase family. It depends on Mg(2+) as a cofactor. In terms of processing, activated by phosphorylation.

It catalyses the reaction alpha-D-glucosamine 1-phosphate = D-glucosamine 6-phosphate. In terms of biological role, catalyzes the conversion of glucosamine-6-phosphate to glucosamine-1-phosphate. The protein is Phosphoglucosamine mutase of Erythrobacter litoralis (strain HTCC2594).